A 438-amino-acid polypeptide reads, in one-letter code: UDP-glycosyltransferase 84B2 (438 aa).

UDP-alpha-D-glucose-binding positions include Ser-260, 314–316 (GQQ), 331–339 (HCGWNSTIE), and 353–356 (WIDQ).

This sequence belongs to the UDP-glycosyltransferase family.

This Arabidopsis thaliana (Mouse-ear cress) protein is UDP-glycosyltransferase 84B2 (UGT84B2).